The primary structure comprises 260 residues: Tropinone reductase homolog At2g29330 (260 aa).

Leu13–His37 is an NADP(+) binding site. Position 146 (Ser146) interacts with substrate. Tyr159 serves as the catalytic Proton acceptor.

The protein belongs to the short-chain dehydrogenases/reductases (SDR) family. SDR65C subfamily.

Reductase active only on small flexible lipophilic carbonyls. No activity with cyclic monoterpenes, tropinone, nitrogen-containing tropinone analogs, tropine or pseudotropine as substrate. The sequence is that of Tropinone reductase homolog At2g29330 from Arabidopsis thaliana (Mouse-ear cress).